The chain runs to 293 residues: 3-hydroxybutyryl-CoA dehydrogenase (293 aa).

It belongs to the 3-hydroxyacyl-CoA dehydrogenase family.

The enzyme catalyses (3S)-3-hydroxybutanoyl-CoA + NADP(+) = acetoacetyl-CoA + NADPH + H(+). It functions in the pathway lipid metabolism; butanoate metabolism. The sequence is that of 3-hydroxybutyryl-CoA dehydrogenase (hbdA) from Bradyrhizobium diazoefficiens (strain JCM 10833 / BCRC 13528 / IAM 13628 / NBRC 14792 / USDA 110).